The following is a 115-amino-acid chain: Non-specific lipid-transfer protein Cor a 8.0101 (115 aa).

An N-terminal signal peptide occupies residues 1 to 23 (MGSLKLVCAVLLCMMVAAPVARA). Disulfide bonds link Cys27–Cys74, Cys37–Cys51, Cys52–Cys97, and Cys72–Cys111.

The protein belongs to the plant LTP family. In terms of assembly, monomer. As to expression, expressed in seed (at protein level). Expressed in seed.

Functionally, plant non-specific lipid-transfer proteins transfer phospholipids as well as galactolipids across membranes. May play a role in wax or cutin deposition in the cell walls of expanding epidermal cells and certain secretory tissues. The chain is Non-specific lipid-transfer protein Cor a 8.0101 from Corylus avellana (European hazel).